Reading from the N-terminus, the 72-residue chain is Phaiodotoxin-3 (72 aa).

Residues 1 to 72 (KFIRHKDESF…CFGALESKCA (72 aa)) enclose the LCN-type CS-alpha/beta domain. Intrachain disulfides connect cysteine 13/cysteine 38, cysteine 23/cysteine 50, cysteine 27/cysteine 52, and cysteine 63/cysteine 71.

This sequence belongs to the long (4 C-C) scorpion toxin superfamily. Sodium channel inhibitor family. In terms of tissue distribution, expressed by the venom gland.

It localises to the secreted. Its function is as follows. Sodium channel (Nav) specific neurotoxin. This chain is Phaiodotoxin-3, found in Anuroctonus phaiodactylus (Mafia scorpion).